A 263-amino-acid polypeptide reads, in one-letter code: Proliferating cell nuclear antigen (263 aa).

The DNA-binding element occupies 61–80 (RCDRTINLGLSLANMSKALK).

This sequence belongs to the PCNA family. Homotrimer. Forms a complex with activator 1 heteropentamer in the presence of ATP.

The protein resides in the nucleus. Its function is as follows. This protein is an auxiliary protein of DNA polymerase delta and is involved in the control of eukaryotic DNA replication by increasing the polymerase's processibility during elongation of the leading strand. The sequence is that of Proliferating cell nuclear antigen (pcn-1) from Caenorhabditis elegans.